The sequence spans 302 residues: MANSQTVMAMIRLARPPFRNNHDKVAFAIHSSFVASGYILTATGRPAFADEALSSSSQNDVGIEGWNEFEGEYAFVYANPKKGSKKILVKCLAMDDKLLVDAIADGGAEPAHLEIKVGDYAEESNEGDYSAQFKNLDKLVTDLQSEIIDKLDGKPKPVASRAQSSSETNEEPRYYDDTPNPLGPQIHPSGVVVPPIPGNGGYSDLFPGPGAGMYPGRGGFGDGSMLVGPTDPRFFPFGDGSDRPGFMGPPHPGMPPPGARFDPYGPPGVPGFEPGRFTRQPPRGPGGGHPDLEHFPGGSDFI.

N-acetylalanine is present on Ala-2. Disordered stretches follow at residues 151-188 (LDGK…QIHP) and 259-302 (ARFD…SDFI). A compositionally biased stretch (pro residues) spans 259 to 269 (ARFDPYGPPGV).

Belongs to the proteasome inhibitor PI31 family.

Could play an important role in control of proteasome function. Inhibits the hydrolysis of protein and peptide substrates by the 20S proteasome. The sequence is that of Probable proteasome inhibitor from Arabidopsis thaliana (Mouse-ear cress).